Reading from the N-terminus, the 325-residue chain is Glutarate 2-hydroxylase (325 aa).

Fe cation-binding residues include H160, D162, and H292.

The protein belongs to the glutarate hydroxylase family. Homotetramer. It depends on Fe(2+) as a cofactor.

The catalysed reaction is glutarate + 2-oxoglutarate + O2 = (S)-2-hydroxyglutarate + succinate + CO2. Its pathway is amino-acid degradation. Acts as an alpha-ketoglutarate-dependent dioxygenase catalyzing hydroxylation of glutarate (GA) to L-2-hydroxyglutarate (L2HG). Functions in a L-lysine degradation pathway that proceeds via cadaverine, glutarate and L-2-hydroxyglutarate. This Escherichia coli O6:K15:H31 (strain 536 / UPEC) protein is Glutarate 2-hydroxylase.